The chain runs to 234 residues: Melanoregulin (234 aa).

The segment at 215–234 (MNQNISGGEDEDEDESEPDD) is disordered. Acidic residues predominate over residues 222-234 (GEDEDEDESEPDD).

Belongs to the melanoregulin family.

The protein resides in the apical cell membrane. Its subcellular location is the melanosome membrane. It is found in the lysosome membrane. It localises to the cytoplasmic vesicle membrane. In terms of biological role, probably functions as a cargo-recognition protein that couples cytoplasmic vesicles to the transport machinery. Contributes to retrograde melanosome transport from the cell periphery to the center. Overexpression causes accumulation of late endosomes and/or lysosomes at the microtubule organising center (MTOC) at the center of the cell. Probably binds cholesterol and requires the presence of cholesterol in membranes to function in microtubule-mediated retrograde organelle transport. Binds phosphatidylinositol 3-phosphate, phosphatidylinositol 4-phosphate, phosphatidylinositol 5-phosphate and phosphatidylinositol 3,5-bisphosphate. In Danio rerio (Zebrafish), this protein is Melanoregulin (mreg).